The chain runs to 162 residues: L-amino acid N-acetyltransferase AaaT (162 aa).

In terms of domain architecture, N-acetyltransferase spans 4–162; that stretch reads IVIRHAETRD…VDAYYMARVK (159 aa).

Belongs to the acetyltransferase family.

It carries out the reaction L-phenylalanine + acetyl-CoA = N-acetyl-L-phenylalanine + CoA + H(+). The enzyme catalyses L-methionine + acetyl-CoA = N-acetyl-L-methionine + CoA + H(+). Its function is as follows. Catalyzes the N-acetylation of L-phenylalanine and L-methionine using acetyl-CoA as acetyl donor in vitro. Cannot accept L-tyrosine as substrate and propionyl-CoA, succinyl-CoA or (S)-methylmalonyl-CoA as acyl donors. Is also able to acetylate and thus detoxify several nonhydrolyzable aminoacyl adenylates, but not the processed form of the peptide-nucleotide antibiotic microcin C (McC). When overproduced, provides complete resistance to leucyl sulfamoyl adenylate (LSA) and partial resistance to alanyl sulfamoyl adenylate (ASA) and phenylalanyl sulfamoyl adenylate (FSA). Therefore, may protect bacteria from various toxic aminoacyl nucleotides, either exogenous or those generated inside the cell during normal metabolism. The chain is L-amino acid N-acetyltransferase AaaT from Escherichia coli (strain K12).